The following is a 283-amino-acid chain: Bifunctional protein FolD 1 (283 aa).

NADP(+)-binding positions include 166–168 (GRS) and Ile232.

Belongs to the tetrahydrofolate dehydrogenase/cyclohydrolase family. Homodimer.

It catalyses the reaction (6R)-5,10-methylene-5,6,7,8-tetrahydrofolate + NADP(+) = (6R)-5,10-methenyltetrahydrofolate + NADPH. The enzyme catalyses (6R)-5,10-methenyltetrahydrofolate + H2O = (6R)-10-formyltetrahydrofolate + H(+). The protein operates within one-carbon metabolism; tetrahydrofolate interconversion. Its function is as follows. Catalyzes the oxidation of 5,10-methylenetetrahydrofolate to 5,10-methenyltetrahydrofolate and then the hydrolysis of 5,10-methenyltetrahydrofolate to 10-formyltetrahydrofolate. The chain is Bifunctional protein FolD 1 from Lactobacillus johnsonii (strain CNCM I-12250 / La1 / NCC 533).